The primary structure comprises 448 residues: GA-binding protein subunit beta-2 (448 aa).

ANK repeat units lie at residues 5-34 (DLGK…PFTT), 37-66 (LGTS…SRDA), 70-99 (VDRT…DVNA), 103-132 (LKMT…DVHA), and 136-166 (FDKS…QVNV). Ser256 carries the phosphoserine modification. Disordered regions lie at residues 325 to 354 (EEEE…GNER) and 420 to 448 (ELEE…TVSS). Over residues 337-354 (RIGEKTNSVEESKEGNER) the composition is skewed to basic and acidic residues. Residues 345-395 (VEESKEGNERELLQQQLQEANRRAQEYRHQLLKKEQEAEQYRLKLEAIARQ) adopt a coiled-coil conformation. A compositionally biased stretch (polar residues) spans 428 to 448 (VTGSAGTTEPHTRVSMATVSS).

Heterotetramer of two alpha and two beta subunits. The C-terminal is necessary for the formation of a heterotetrameric GABP-alpha-2/beta-2 complex, and also facilitates homotypic dimerization. Interacts with ADGRB2.

The protein localises to the nucleus. May function as transcription factor capable of interacting with purine rich repeats (GA repeats). The chain is GA-binding protein subunit beta-2 (GABPB2) from Homo sapiens (Human).